The chain runs to 628 residues: Phomenoic acid biosynthesis cluster MFS-type transporter (628 aa).

A run of 14 helical transmembrane segments spans residues 102-122 (IHGF…FLYA), 150-170 (VGFV…YGIL), 174-194 (WLYI…GAAP), 204-224 (VFAG…LSIN), 232-252 (AYLS…PVIG), 262-282 (WAFY…FFLL), 302-322 (FVGA…INFG), 329-349 (NSGT…AFAV), 375-395 (MLLF…IYFI), 407-427 (ALDS…TILV), 435-455 (FGYY…ANVF), 488-508 (GFEA…YAVI), 524-544 (IMIA…AVFI), and 595-615 (AKAF…SLGF).

It belongs to the major facilitator superfamily. TCR/Tet family.

The protein localises to the cell membrane. Functionally, MFS-type transporter; part of the gene cluster that mediates the biosynthesis of phomenoic acid, a long chain aliphatic carboxylic acid that does not appear to be essential for pathogenicity but may play a role in allowing to outcompete other fungi in the environmental niche via its antifungal properties. Is probably involved in the efflux of phomenoic acid. The chain is Phomenoic acid biosynthesis cluster MFS-type transporter from Leptosphaeria maculans (strain JN3 / isolate v23.1.3 / race Av1-4-5-6-7-8) (Blackleg fungus).